Here is a 28-residue protein sequence, read N- to C-terminus: U1-poneritoxin-Da4a (28 aa).

Ala-28 carries the alanine amide modification.

As to expression, expressed by the venom gland.

Its subcellular location is the secreted. In terms of biological role, shows a broad spectrum of activity against both Gram-positive and Gram-negative bacteria. Also has antimicrobial activity against S.cerevisiae. Has insecticidal and non-hemolytic activity. This Dinoponera australis (Giant neotropical hunting ant) protein is U1-poneritoxin-Da4a.